A 394-amino-acid polypeptide reads, in one-letter code: Cytochrome b561 and DOMON domain-containing protein At4g12980 (394 aa).

Residues 1 to 24 form the signal peptide; the sequence is MDSSYLRISLSFLFWALLLSPAVS. A DOMON domain is found at 49-169; sequence LKAILHYSYD…GKVNQVWQVG (121 aa). A Cytochrome b561 domain is found at 184–381; sequence GPNLNSVGSL…LEVVTWVIVL (198 aa). The next 2 helical transmembrane spans lie at 220–240 and 252–272; these read IHGI…AMIA and AWFY…VAGW. Heme b contacts are provided by histidine 221, histidine 257, and histidine 290. Residues 292–312 traverse the membrane as a helical segment; that stretch reads NIGICLFSIATLQMFAMLLRP. Histidine 326 lines the heme b pocket. 2 consecutive transmembrane segments (helical) span residues 328-348 and 361-381; these read GVGY…LSIL and VIGT…VIVL.

The cofactor is heme b.

It localises to the membrane. Functionally, may act as a catecholamine-responsive trans-membrane electron transporter. The polypeptide is Cytochrome b561 and DOMON domain-containing protein At4g12980 (Arabidopsis thaliana (Mouse-ear cress)).